A 352-amino-acid polypeptide reads, in one-letter code: Phosphoribosylformylglycinamidine cyclo-ligase (352 aa).

Belongs to the AIR synthase family.

It is found in the cytoplasm. It carries out the reaction 2-formamido-N(1)-(5-O-phospho-beta-D-ribosyl)acetamidine + ATP = 5-amino-1-(5-phospho-beta-D-ribosyl)imidazole + ADP + phosphate + H(+). It participates in purine metabolism; IMP biosynthesis via de novo pathway; 5-amino-1-(5-phospho-D-ribosyl)imidazole from N(2)-formyl-N(1)-(5-phospho-D-ribosyl)glycinamide: step 2/2. The chain is Phosphoribosylformylglycinamidine cyclo-ligase from Saccharophagus degradans (strain 2-40 / ATCC 43961 / DSM 17024).